Here is a 250-residue protein sequence, read N- to C-terminus: DNA repair protein RecO (250 aa).

It belongs to the RecO family.

Its function is as follows. Involved in DNA repair and RecF pathway recombination. The chain is DNA repair protein RecO from Staphylococcus aureus (strain bovine RF122 / ET3-1).